The following is an 872-amino-acid chain: MDSRYNPATLEEKWQKTWVELGLDKTQTQSNKPKFYALSMFPYPSGSLHMGHVRNYTITDVIARLKRMQGYRVLHPMGWDAFGLPAENAAIDRGVPPAKWTYQNITQMRQQLQRLGLSIDWDSEVATCSPDYYKWTQWIFLQFLQAGLAYQKEAAVNWDPIDQTVLANEQVDNEGRSWRSGAIVERKLLRQWFLKITDYAEELLNDLDKLTGWPERVKLMQANWIGKSSGAYLEFPIVGSNEKIAVYTTRPDTVYGVSYVVLAPEHPLTKQVTTKTQQAAVDTFIQEVTNQSELERTAEDKPKRGIATGGKAINPFTGEEVPIWIADYVLYEYGTGAVMGVPAHDVRDFKFAQRYDLPIDFVIAAPDDVAGFDLSPTSETEEVTQVVQIEYNQAYTEPGILINSGAFTGMTSTDAKQAIVKYATEKGFGKERIQYRLRDWLISRQRYWGAPIPVIHCPNCGIVPVPDKDLPVILPEEVEFTGRGGSPLAQLESWVNVPCPTCGTPAKRETDTMDTFIDSSWYFLRFTDARNEAQVFESAKTNDWMPVDQYVGGIEHAILHLLYSRFFTKVLRDRGLLNFDEPFERLLTQGMVQGLTYFNPNKGGKDKWVPSHLVNPNDPRDPQTGEPLQRLYATMSKSKGNGVAPEDVIAKYGVDTARMFILFKAPPEKDLEWDEADVEGQFRFLNRVWRLVTDYVASGVNPKNKSGELSKSEKDLRRAIHTAIQSVTEDLEDDYQFNTAISELMKLSNALTDANGKDSRVYAEGIKTLVVLLAPFAPHIAEELWRLLGNSESVHTQTWPAFDPAALVADEITLVIQVNGKKRADIQVPSQADKAELEKYARESEVVQRHLEGKEIKKVIVVPGKLVNFVVG.

Positions 42–52 (PYPSGSLHMGH) match the 'HIGH' region motif. A 'KMSKS' region motif is present at residues 634–638 (TMSKS). ATP is bound at residue K637.

The protein belongs to the class-I aminoacyl-tRNA synthetase family.

It localises to the cytoplasm. It carries out the reaction tRNA(Leu) + L-leucine + ATP = L-leucyl-tRNA(Leu) + AMP + diphosphate. This is Leucine--tRNA ligase from Nostoc sp. (strain PCC 7120 / SAG 25.82 / UTEX 2576).